A 163-amino-acid polypeptide reads, in one-letter code: Nucleotide-binding protein NT01EI_1072 (163 aa).

It belongs to the YajQ family.

In terms of biological role, nucleotide-binding protein. The protein is Nucleotide-binding protein NT01EI_1072 of Edwardsiella ictaluri (strain 93-146).